Reading from the N-terminus, the 387-residue chain is Carbamoyl phosphate synthase small chain (387 aa).

Residues 1–189 (MIKSAILVLE…GLPEDKQEQD (189 aa)) are CPSase. Residues serine 47, glycine 241, and glycine 243 each contribute to the L-glutamine site. A Glutamine amidotransferase type-1 domain is found at 193 to 380 (HVVAYDFGAK…IELIEQYCQK (188 aa)). Cysteine 269 serves as the catalytic Nucleophile. 5 residues coordinate L-glutamine: leucine 270, glutamine 273, asparagine 311, glycine 313, and phenylalanine 314. Residues histidine 353 and glutamate 355 contribute to the active site.

It belongs to the CarA family. In terms of assembly, composed of two chains; the small (or glutamine) chain promotes the hydrolysis of glutamine to ammonia, which is used by the large (or ammonia) chain to synthesize carbamoyl phosphate. Tetramer of heterodimers (alpha,beta)4.

It catalyses the reaction hydrogencarbonate + L-glutamine + 2 ATP + H2O = carbamoyl phosphate + L-glutamate + 2 ADP + phosphate + 2 H(+). It carries out the reaction L-glutamine + H2O = L-glutamate + NH4(+). It participates in amino-acid biosynthesis; L-arginine biosynthesis; carbamoyl phosphate from bicarbonate: step 1/1. It functions in the pathway pyrimidine metabolism; UMP biosynthesis via de novo pathway; (S)-dihydroorotate from bicarbonate: step 1/3. In terms of biological role, small subunit of the glutamine-dependent carbamoyl phosphate synthetase (CPSase). CPSase catalyzes the formation of carbamoyl phosphate from the ammonia moiety of glutamine, carbonate, and phosphate donated by ATP, constituting the first step of 2 biosynthetic pathways, one leading to arginine and/or urea and the other to pyrimidine nucleotides. The small subunit (glutamine amidotransferase) binds and cleaves glutamine to supply the large subunit with the substrate ammonia. In Photorhabdus laumondii subsp. laumondii (strain DSM 15139 / CIP 105565 / TT01) (Photorhabdus luminescens subsp. laumondii), this protein is Carbamoyl phosphate synthase small chain.